Here is a 44-residue protein sequence, read N- to C-terminus: Entericidin A (44 aa).

The N-terminal stretch at 1–21 is a signal peptide; the sequence is MMKRLLGLVMLLLFTCTLLTG. C22 is lipidated: N-palmitoyl cysteine. The S-diacylglycerol cysteine moiety is linked to residue C22.

This sequence belongs to the EcnA/EcnB lipoprotein family.

The protein resides in the cell membrane. Functionally, acts as antidote to the effect of entericidin B. This is Entericidin A (ecnA) from Citrobacter freundii.